The following is a 264-amino-acid chain: Gap junction beta-1 protein (264 aa).

Residues 1-22 (MNWAGLYAILSGVNRHSTSIGR) are Cytoplasmic-facing. A helical membrane pass occupies residues 23–45 (IWLSVVFIFRIMVLVAAAESVWG). At 46–75 (DEKSAFTCNTQQPGCNSVCYDHFFPISHIR) the chain is on the extracellular side. Residues 76–98 (LWALQLIIVSTPALLVAMHVAHL) form a helical membrane-spanning segment. The Cytoplasmic segment spans residues 99 to 130 (QHQEKKELRLSRHVKDQELAEVKKHKVKISGT). The helical transmembrane segment at 131–153 (LWWTYISSVFFRIIFEAAFMYIF) threads the bilayer. Over 154–191 (YLIYPGYSMIRLLKCDAYPCPNTVDCFVSRPTEKTIFT) the chain is Extracellular. A helical membrane pass occupies residues 192–214 (VFMLVASGVCIVLNVAEVFFLIA). Over 215 to 264 (QACTRRARRHRDSGSISKEHQQNEMNLLITGGSIIKRSAGQEKGDHCSTS) the chain is Cytoplasmic.

It belongs to the connexin family. Beta-type (group I) subfamily. A connexon is composed of a hexamer of connexins. In terms of tissue distribution, lung, liver, intestines, stomach and kidney.

The protein resides in the cell membrane. It localises to the cell junction. It is found in the gap junction. Functionally, one gap junction consists of a cluster of closely packed pairs of transmembrane channels, the connexons, through which materials of low MW diffuse from one cell to a neighboring cell. The chain is Gap junction beta-1 protein (gjb1) from Xenopus laevis (African clawed frog).